The sequence spans 409 residues: uncharacterized protein (409 aa).

Position 46 (H46) interacts with Zn(2+). Residue E49 is the Proton acceptor of the active site. Zn(2+)-binding residues include H50 and E126.

The protein belongs to the peptidase M16 family. Requires Zn(2+) as cofactor.

This is an uncharacterized protein from Bacillus subtilis (strain 168).